The sequence spans 333 residues: Tryptophan--tRNA ligase (333 aa).

ATP contacts are provided by residues Q11 to S13 and G19 to N20. A 'HIGH' region motif is present at residues P12 to N20. D135 lines the L-tryptophan pocket. Residues G147–D149, V186, and K195–S199 contribute to the ATP site. A 'KMSKS' region motif is present at residues K195–S199.

It belongs to the class-I aminoacyl-tRNA synthetase family. In terms of assembly, homodimer.

The protein resides in the cytoplasm. It carries out the reaction tRNA(Trp) + L-tryptophan + ATP = L-tryptophyl-tRNA(Trp) + AMP + diphosphate + H(+). Its function is as follows. Catalyzes the attachment of tryptophan to tRNA(Trp). This chain is Tryptophan--tRNA ligase, found in Pasteurella multocida (strain Pm70).